A 236-amino-acid chain; its full sequence is Alanyl-tRNA editing protein AlaX-M (236 aa).

Positions 101, 105, and 205 each coordinate Zn(2+).

The protein belongs to the class-II aminoacyl-tRNA synthetase family. Editing domain AlaX-M subfamily. Requires Zn(2+) as cofactor.

The protein resides in the cytoplasm. Functionally, functions in trans to edit the amino acid moiety from incorrectly charged Ser-tRNA(Ala). This Saccharolobus solfataricus (strain ATCC 35092 / DSM 1617 / JCM 11322 / P2) (Sulfolobus solfataricus) protein is Alanyl-tRNA editing protein AlaX-M (alaXM).